The primary structure comprises 471 residues: Elongation factor 1-alpha (471 aa).

The region spanning 10–239 (KPRLNACFIG…EALNYQDVPE (230 aa)) is the tr-type G domain. Residues 19-26 (GHVDSGKS) form a G1 region. 19–26 (GHVDSGKS) contacts GTP. The G2 stretch occupies residues 75 to 79 (GITIT). Positions 96–99 (DCPG) are G3. GTP is bound by residues 96–100 (DCPGH) and 156–159 (NKMD). Positions 156–159 (NKMD) are G4. The tract at residues 196 to 198 (SAF) is G5.

It belongs to the TRAFAC class translation factor GTPase superfamily. Classic translation factor GTPase family. EF-Tu/EF-1A subfamily. As to quaternary structure, component of the eukaryotic elongation factor 1 complex (eEF1).

Its subcellular location is the cytoplasm. It participates in protein biosynthesis; polypeptide chain elongation. GTP-binding component of the eukaryotic elongation factor 1 complex (eEF1). In its active GTP-bound form, binds to and delivers aminoacyl-tRNA to the A-site of ribosomes during protein biosynthesis. In the presence of a correct codon-anticodon match between the aminoacyl-tRNA and the A-site codon of the ribosome-bound mRNA, the ribosome acts as a GTPase activator and the GTP is hydrolyzed. The inactive GDP-bound form leaves the ribosome and must be recycled by its guanine nucleotide exchange factor (GEF) (eEF1B subcomplex) before binding another molecule of aminoacyl-tRNA. Required for nuclear export of aminoacyl-tRNAs. May also be involved in translational quality control by targeting cotranslationally damaged proteins to the proteasome. The sequence is that of Elongation factor 1-alpha (TEF1) from Encephalitozoon cuniculi (strain GB-M1) (Microsporidian parasite).